The primary structure comprises 434 residues: Monodehydroascorbate reductase, seedling isozyme (434 aa).

FAD-binding positions include 13–16 (GGVA), Glu40, Arg47, Lys52, Ile95, and 146–147 (RE). Residues 171 to 177 (GGYIGLE), Glu195, Arg201, and Gly260 contribute to the NAD(+) site. 173–177 (YIGLE) serves as a coordination point for NADP(+). NADP(+) is bound by residues Arg201 and Gly260. Asp297 serves as a coordination point for FAD. NAD(+) is bound at residue 313–314 (EH). 313–314 (EH) serves as a coordination point for NADP(+). Val315 contacts FAD. Position 319 (Arg319) interacts with L-ascorbate. Position 348 (Tyr348) interacts with FAD. An NAD(+)-binding site is contributed by Tyr348. Residue Tyr348 participates in NADP(+) binding. An L-ascorbate-binding site is contributed by Arg350.

Belongs to the FAD-dependent oxidoreductase family. The cofactor is FAD.

Its subcellular location is the cytoplasm. The catalysed reaction is 2 monodehydro-L-ascorbate radical + NADH + H(+) = 2 L-ascorbate + NAD(+). Catalyzes the conversion of monodehydroascorbate to ascorbate, oxidizing NADH in the process. This chain is Monodehydroascorbate reductase, seedling isozyme, found in Cucumis sativus (Cucumber).